The chain runs to 363 residues: Type 3 secretion system translocon protein SctB (363 aa).

Residues 99–120 traverse the membrane as a helical segment; that stretch reads ISSLSSNAVSLIISVAVLLSAL.

This sequence belongs to the SctB/SipC family. In terms of assembly, the core secretion machinery of the T3SS is composed of approximately 20 different proteins, including cytoplasmic components, a base, an export apparatus and a needle. This subunit is involved in the formation of a pore, called the translocon, in host membrane.

The protein resides in the secreted. It is found in the host membrane. Functionally, component of the type III secretion system (T3SS), also called injectisome, which is used to inject bacterial effector proteins into eukaryotic host cells. IpaB/SctE and IpaC/SctB are inserted into the host membrane where they form a pore and allow the translocation of effector proteins into the cytosol of target cells. This is Type 3 secretion system translocon protein SctB from Shigella dysenteriae.